Here is a 453-residue protein sequence, read N- to C-terminus: Serine protease HTRA3 (453 aa).

Positions 1 to 17 (MQARALLLAALAALALA) are cleaved as a signal peptide. The 64-residue stretch at 21-84 (PAAPCPARCD…ECVRGLCRCR (64 aa)) folds into the IGFBP N-terminal domain. Disulfide bonds link C25–C48, C29–C50, C34–C51, C39–C54, C62–C76, C70–C81, C83–C101, and C90–C126. One can recognise a Kazal-like domain in the interval 64–128 (GPLDSPCGES…RQLQKGACPL (65 aa)). A serine protease region spans residues 175–340 (GSGFIMSEAG…AIPSDRITRF (166 aa)). Catalysis depends on charge relay system residues H191, D227, and S305. The PDZ domain occupies 359-444 (IRMRTITPSL…EVRRGNDDLL (86 aa)).

Belongs to the peptidase S1C family. As to quaternary structure, homotrimer. Interacts with TGFB1; the interaction inhibits TGFB-mediated signaling. Interacts with BMP4; the interaction inhibits BMP4-mediated signaling. Interacts with TGFB2 and GDF5. Interacts with MYH9. As to expression, widely expressed, with highest levels in both adult and fetal heart, ovary, uterus placenta, and bladder. In the endometrium, expressed in epithelial glands and the stroma. Also present in leukocytes. Isoform 1 is predominant in heart and skeletal muscle, whereas isoform 2 is predominant in placenta and kidney.

The protein localises to the secreted. Functionally, serine protease that cleaves beta-casein/CSN2 as well as several extracellular matrix (ECM) proteoglycans such as decorin/DCN, biglycan/BGN and fibronectin/FN1. Inhibits signaling mediated by TGF-beta family proteins possibly indirectly by degradation of these ECM proteoglycans. May act as a tumor suppressor. Negatively regulates, in vitro, trophoblast invasion during placental development and may be involved in the development of the placenta in vivo. May also have a role in ovarian development, granulosa cell differentiation and luteinization. The polypeptide is Serine protease HTRA3 (HTRA3) (Homo sapiens (Human)).